Reading from the N-terminus, the 301-residue chain is Beta carbonic anhydrase 5, chloroplastic (301 aa).

A chloroplast-targeting transit peptide spans 1-56 (MAATPTHFSVSHDPFSSTSLLNLQTQAIFGPNHSLKTTQLRIPASFRRKATNLQVM). The residue at position 65 (Thr65) is a Phosphothreonine. Ser128 is subject to Phosphoserine. Position 231 is an S-nitrosocysteine (Cys231).

The protein belongs to the beta-class carbonic anhydrase family. Strongly expressed in aerial tissues including leaves, stems, flowers and siliques.

It localises to the plastid. The protein localises to the chloroplast. It carries out the reaction hydrogencarbonate + H(+) = CO2 + H2O. In terms of biological role, reversible hydration of carbon dioxide. In Arabidopsis thaliana (Mouse-ear cress), this protein is Beta carbonic anhydrase 5, chloroplastic (BCA5).